Here is a 315-residue protein sequence, read N- to C-terminus: Methionyl-tRNA formyltransferase (315 aa).

113 to 116 (SLLP) provides a ligand contact to (6S)-5,6,7,8-tetrahydrofolate.

The protein belongs to the Fmt family.

The enzyme catalyses L-methionyl-tRNA(fMet) + (6R)-10-formyltetrahydrofolate = N-formyl-L-methionyl-tRNA(fMet) + (6S)-5,6,7,8-tetrahydrofolate + H(+). Its function is as follows. Attaches a formyl group to the free amino group of methionyl-tRNA(fMet). The formyl group appears to play a dual role in the initiator identity of N-formylmethionyl-tRNA by promoting its recognition by IF2 and preventing the misappropriation of this tRNA by the elongation apparatus. The chain is Methionyl-tRNA formyltransferase from Enterobacter sp. (strain 638).